Consider the following 166-residue polypeptide: Cold-inducible RNA-binding protein B (166 aa).

One can recognise an RRM domain in the interval 5 to 83 (GKLFIGGLNF…RQIRVDQAGK (79 aa)). Residues 68 to 166 (GKAVDGRQIR…DSYDSYATHE (99 aa)) are disordered. The span at 92-115 (YRGGSSGGRGFFRGGRGRGGGDRG) shows a compositional bias: gly residues. Over residues 133 to 149 (GSRDYYSSGRSQGSYGD) the composition is skewed to low complexity. The segment covering 157 to 166 (DSYDSYATHE) has biased composition (basic and acidic residues).

Interacts with prmt1. Interacts with elavl1/elrA (via RRM3). Associates with ribosomes. Post-translationally, methylated on arginine residues within RGG motifs. Methylation by prmt1 promotes cytoplasmic accumulation. As to expression, in adults, most abundant in testis, ovary, brain and liver, with lower expression in kidney and heart.

The protein localises to the nucleus. The protein resides in the nucleoplasm. It is found in the cytoplasm. In terms of biological role, cold-inducible mRNA binding protein. Acts cooperatively with elavl1/elrA to stabilize AU-rich element (ARE)-containing mRNAs by binding to them and inhibiting their deadenylation. Essential for embryonic gastrulation and neural development, acting to maintain the expression of a set of adhesion molecules, and cell movement during embryogenesis. Required for pronephros development. This is Cold-inducible RNA-binding protein B (cirbp-b) from Xenopus laevis (African clawed frog).